The following is a 925-amino-acid chain: MYGIDNYPKNYHASGIGLVNLAALGYSKNEVSGGNEGGGAPKPKAGLYPSLPYPSSESVGGMPYVVKQTSHAQNASYAGPTMGMGMPVPEAPSAPAPYPSATPYPGSGLYPSLPSANVSSLPYPTAPMAPYPTGMPYPTGMPQPNLPYPAAPLAPYPSAMPGLPGMPMPYAPMPTSPAPQHNIGFPALPYPTAPPPESAPTQEEEPSVGVAELSFTSVKVPENQNMFWMGRKATSARQNSVSKGDFQSLRDSCLANGTMFEDPDFPATNASLMYSRRPDRYYEWLRPGDIADDPQFFVEGYSRFDVQQGELGDCWLLAAAANLTQDSTLFFRVIPPDQDFQENYAGIFHFKFWQYGKWVEVVIDDRLPTYNGELIYMHSTEKNEFWSALLEKAYAKLHGSYEALKGGTTCEAMEDFTGGVTEWYDIKEAPPNLFSIMMKAAERGSMMGCSLEPDPHVLEAETPQGLIRGHAYSITKVCLMDISTPNRQGKLPMIRMRNPWGNDAEWSGPWSDSSPEWRFIPEHTKEEIGLNFDRDGEFWMSFQDFLNHFDRVEICNLSPDSLTEDQQHSSRRKWEMSMFEGEWTSGVTAGGCRNFLETFWHNPQYIISLEDPDDEDDDGKCTAIVALMQKNRRSKRNVGIDCLTIGFAIYHLTDRDMQVKPQGLNFFKYRASVARSPHFINTREVCARFKLPPGHYLIVPSTFDPNEEGEFIIRVFSETRNNMEENDDEVGFGETDDRIAPSLPPPTPKEEDDPQRIALRRLFDSVAGSDEEVDWQELKRILDHSMRDVMVGSDGFSKDAVRSMVAMLDKDRSGRLGFEEFEALLTDIAKWRAVFKLYDTRRTGSIDGFHLRGALNSAGYHLNNRLLNALAHRYGSREGQIPFDDFLMCAIKVRTFIEMFRERDTDNSDTAFFNLDDWLERTIYS.

The Calpain catalytic domain maps to 259-558 (MFEDPDFPAT…FDRVEICNLS (300 aa)). Catalysis depends on residues C314, H470, and N498. Residues 559–728 (PDSLTEDQQH…TRNNMEENDD (170 aa)) form a domain III region. Positions 723–753 (MEENDDEVGFGETDDRIAPSLPPPTPKEEDD) are disordered. The tract at residues 729 to 748 (EVGFGETDDRIAPSLPPPTP) is linker. Positions 749 to 925 (KEEDDPQRIA…DDWLERTIYS (177 aa)) are domain IV. EF-hand domains follow at residues 796 to 831 (FSKD…IAKW) and 826 to 861 (TDIA…AGYH). Ca(2+)-binding residues include D809, D811, S813, R815, E820, D839, T843, S845, and H850.

Belongs to the peptidase C2 family. Post-translationally, undergoes calcium-dependent autolytic cleavage between Asn-74 and Ala-75 and between Gln-224 and Asn-225 to produce two major products, calpain B catalytic subunit 1 and calpain B catalytic subunit 2. This autolysis is necessary for activation of the protein. In terms of tissue distribution, strongly expressed in follicular and border cells of the oocyte. Ubiquitously expressed in early embryos. Localized to the trachea and their orifices, and to the larynx of late embryos. Restricted to the salivary gland in third instar larvae.

Its subcellular location is the cytoplasm. It is found in the membrane. With respect to regulation, activated by millimolar concentrations of calcium. In terms of biological role, calcium-regulated non-lysosomal thiol-protease. This is Calpain-B from Drosophila melanogaster (Fruit fly).